Reading from the N-terminus, the 232-residue chain is uncharacterized protein (232 aa).

This is an uncharacterized protein from Escherichia coli (strain K12).